Here is a 308-residue protein sequence, read N- to C-terminus: Ribosomal RNA small subunit methyltransferase H (308 aa).

Residues 34–36, aspartate 54, phenylalanine 80, aspartate 101, and glutamine 108 each bind S-adenosyl-L-methionine; that span reads GGH.

The protein belongs to the methyltransferase superfamily. RsmH family.

The protein resides in the cytoplasm. The catalysed reaction is cytidine(1402) in 16S rRNA + S-adenosyl-L-methionine = N(4)-methylcytidine(1402) in 16S rRNA + S-adenosyl-L-homocysteine + H(+). In terms of biological role, specifically methylates the N4 position of cytidine in position 1402 (C1402) of 16S rRNA. This Ureaplasma urealyticum serovar 10 (strain ATCC 33699 / Western) protein is Ribosomal RNA small subunit methyltransferase H.